A 77-amino-acid polypeptide reads, in one-letter code: DNA-directed RNA polymerase subunit epsilon (77 aa).

The protein belongs to the RNA polymerase subunit epsilon family. RNAP is composed of a core of 2 alpha, a beta and a beta' subunit. The core is associated with a delta subunit, and at least one of epsilon or omega. When a sigma factor is associated with the core the holoenzyme is formed, which can initiate transcription.

It carries out the reaction RNA(n) + a ribonucleoside 5'-triphosphate = RNA(n+1) + diphosphate. Its function is as follows. A non-essential component of RNA polymerase (RNAP). This is DNA-directed RNA polymerase subunit epsilon from Streptococcus pneumoniae (strain P1031).